The chain runs to 266 residues: 15-hydroxyprostaglandin dehydrogenase [NAD(+)] (266 aa).

NAD(+) is bound by residues 12-20 (GAAQGIGRA), 36-37 (DW), 63-65 (CDV), and Asn-91. Ser-138 and Gln-148 together coordinate substrate. Tyr-151 serves as the catalytic Proton acceptor. NAD(+) is bound by residues 151 to 155 (YCASK) and 186 to 188 (VNT).

It belongs to the short-chain dehydrogenases/reductases (SDR) family. As to quaternary structure, homodimer. Detected in colon epithelium (at protein level).

It localises to the cytoplasm. It carries out the reaction prostaglandin E2 + NAD(+) = 15-oxoprostaglandin E2 + NADH + H(+). The enzyme catalyses (15S)-hydroxy-(5Z,8Z,11Z,13E)-eicosatetraenoate + NAD(+) = 15-oxo-(5Z,8Z,11Z,13E)-eicosatetraenoate + NADH + H(+). The catalysed reaction is (11R)-hydroxy-(5Z,8Z,12E,14Z)-eicosatetraenoate + NAD(+) = 11-oxo-(5Z,8Z,12E,14Z)-eicosatetraenoate + NADH + H(+). It catalyses the reaction lipoxin A4 + NAD(+) = 15-oxo-(5S,6R)-dihydroxy-(7E,9E,11Z,13E)-eicosatetraenoate + NADH + H(+). It carries out the reaction 15-oxo-(5S,6R)-dihydroxy-(7E,9E,11Z)-eicosatrienoate + NADH + H(+) = (5S,6R,15S)-trihydroxy-(7E,9E,11Z)-eicosatrienoate + NAD(+). The enzyme catalyses prostaglandin A1 + NAD(+) = 15-oxo-prostaglandin A1 + NADH + H(+). The catalysed reaction is prostaglandin E1 + NAD(+) = 15-oxoprostaglandin E1 + NADH + H(+). It catalyses the reaction 14-hydroxy-(4Z,7Z,10Z,12E,16Z,19Z)-docosahexaenoate + NAD(+) = 14-oxo-(4Z,7Z,10Z,12E,16Z,19Z)-docosahexaenoate + NADH + H(+). It carries out the reaction resolvin E1 + NAD(+) = 18-oxo-resolvin E1 + NADH + H(+). The enzyme catalyses resolvin D1 + NAD(+) = 8-oxoresolvin D1 + NADH + H(+). The catalysed reaction is resolvin D1 + NAD(+) = 17-oxoresolvin D1 + NADH + H(+). It catalyses the reaction resolvin D2 + NAD(+) = 7-oxoresolvin D2 + NADH + H(+). It carries out the reaction resolvin D2 + NAD(+) = 16-oxoresolvin D2 + NADH + H(+). Functionally, catalyzes the NAD-dependent dehydrogenation (oxidation) of a broad array of hydroxylated polyunsaturated fatty acids (mainly eicosanoids and docosanoids, including prostaglandins, lipoxins and resolvins), yielding their corresponding keto (oxo) metabolites. Decreases the levels of the pro-proliferative prostaglandins such as prostaglandin E2 (whose activity is increased in cancer because of an increase in the expression of cyclooxygenase 2) and generates oxo-fatty acid products that can profoundly influence cell function by abrogating pro-inflammatory cytokine expression. Converts resolvins E1, D1 and D2 to their oxo products, which represents a mode of resolvin inactivation. Resolvin E1 plays important roles during the resolution phase of acute inflammation, while resolvins D1 and D2 have a unique role in obesity-induced adipose inflammation. This Homo sapiens (Human) protein is 15-hydroxyprostaglandin dehydrogenase [NAD(+)].